Here is a 460-residue protein sequence, read N- to C-terminus: Asparagine--tRNA ligase (460 aa).

This sequence belongs to the class-II aminoacyl-tRNA synthetase family. In terms of assembly, homodimer.

Its subcellular location is the cytoplasm. The enzyme catalyses tRNA(Asn) + L-asparagine + ATP = L-asparaginyl-tRNA(Asn) + AMP + diphosphate + H(+). This chain is Asparagine--tRNA ligase, found in Picosynechococcus sp. (strain ATCC 27264 / PCC 7002 / PR-6) (Agmenellum quadruplicatum).